The following is a 562-amino-acid chain: Protein wntless (562 aa).

Residues 1–13 (MSGTILENLSGRK) lie on the Cytoplasmic side of the membrane. Residues 14–34 (LSILVSSLMLCQVACFLMGGL) form a helical membrane-spanning segment. Topologically, residues 35 to 239 (YAPVPAGHQT…AIHQNGGFTQ (205 aa)) are lumenal. 2 N-linked (GlcNAc...) asparagine glycosylation sites follow: Asn-58 and Asn-103. Residues 240-260 (VWLLLKTLLFPFVVGIMIWFW) traverse the membrane as a helical segment. Residues 261–270 (RRVHILQRSP) are Cytoplasmic-facing. Residues 271 to 291 (ALLEYMLLYLGGALSFLNLPL) traverse the membrane as a helical segment. Over 292-311 (EYLTLSIEMPYMLLLSDVRQ) the chain is Lumenal. A helical transmembrane segment spans residues 312–332 (GIFYAMLLSFWLVFAGEHMLI). The Cytoplasmic portion of the chain corresponds to 333–344 (QDTPNKSTIRSR). A helical membrane pass occupies residues 345-365 (YWKHLSAVVVGCISLFVFDIC). Over 366-390 (ERGVQLRNPFYSIWTTPLGAKVAMS) the chain is Lumenal. A helical membrane pass occupies residues 391–411 (FIVLAGVSAAIYFLFLCFMVW). The Cytoplasmic segment spans residues 412-441 (KVFKDIGDKRTSLPSMSQARRLHYEGLIYR). A helical membrane pass occupies residues 442–462 (FKFLMLATLLCAGLTVAGFIM). At 463 to 482 (GQMAEGHWKWNEDIEIQLTS) the chain is on the lumenal side. The helical transmembrane segment at 483–503 (AFLTGVYGMWNIYIFALIILY) threads the bilayer. The Cytoplasmic segment spans residues 504–562 (APSHKQWPTMRHSDETTQSNENIVASAASEEIEFSNLPSDSNPSEISSLTSFTRKVAFD).

Belongs to the wntless family. As to quaternary structure, interacts with wg; in the Golgi. Interacts with Vps35, a component of the retromer complex; wls stability is regulated by Vps35.

It localises to the presynaptic cell membrane. It is found in the postsynaptic cell membrane. The protein localises to the cell membrane. Its subcellular location is the endoplasmic reticulum membrane. The protein resides in the endosome membrane. It localises to the golgi apparatus membrane. In terms of biological role, a segment polarity gene required for wingless (wg)-dependent patterning processes, acting in both wg-sending cells and wg-target cells. In non-neuronal cells wls directs wg secretion. The wls traffic loop encompasses the Golgi, the cell surface, an endocytic compartment and a retrograde route leading back to the Golgi, and involves clathrin-mediated endocytosis and the retromer complex (a conserved protein complex consisting of Vps35 and Vps26). In neuronal cells (the larval motorneuron NMJ), the wg signal moves across the synapse via the release of wls-containing exosome-like vesicles. Postsynaptic wls is required for the trafficking of fz2 through the fz2-interacting protein Grip. The chain is Protein wntless from Drosophila virilis (Fruit fly).